The primary structure comprises 571 residues: Glutamate--tRNA ligase (571 aa).

A 'HIGH' region motif is present at residues 110–120 (PNPNGPATLGS).

The protein belongs to the class-I aminoacyl-tRNA synthetase family. Glutamate--tRNA ligase type 2 subfamily.

It localises to the cytoplasm. It catalyses the reaction tRNA(Glu) + L-glutamate + ATP = L-glutamyl-tRNA(Glu) + AMP + diphosphate. Catalyzes the attachment of glutamate to tRNA(Glu) in a two-step reaction: glutamate is first activated by ATP to form Glu-AMP and then transferred to the acceptor end of tRNA(Glu). In Methanosarcina mazei (strain ATCC BAA-159 / DSM 3647 / Goe1 / Go1 / JCM 11833 / OCM 88) (Methanosarcina frisia), this protein is Glutamate--tRNA ligase.